The following is a 168-amino-acid chain: Putative B3 domain-containing protein Os10g0158600 (168 aa).

The segment at residues 4–97 (VVFASARLNA…KARVMLLNRQ (94 aa)) is a DNA-binding region (TF-B3). Residues 105-151 (KTPSTTSSDKNRSLSPSDQLTRASTSAHPSTSKSIPPLRNGTGSTKR) are disordered. Residues 106 to 138 (TPSTTSSDKNRSLSPSDQLTRASTSAHPSTSKS) show a composition bias toward polar residues.

It localises to the nucleus. The protein is Putative B3 domain-containing protein Os10g0158600 of Oryza sativa subsp. japonica (Rice).